We begin with the raw amino-acid sequence, 266 residues long: Mitochondrial S-adenosylmethionine carrier protein (266 aa).

3 Solcar repeats span residues 4–77 (RELC…AKRF), 85–167 (LSPI…LKNL), and 176–264 (VDCW…VRSS). Transmembrane regions (helical) follow at residues 5–25 (ELCASLLAGGAAGMSVDLILF), 49–69 (IYAGVPSTAVGSFPNAAAFFV), 84–104 (YLSPIIHMAAAFLGELVACLI), 141–161 (RGYKSTVLREIPFSLVQFPLW), 181–201 (SAVCGAFAGGFAAAVTTPLDV), and 237–257 (FAGVIPRMTMISLGGFIFLGA).

This sequence belongs to the mitochondrial carrier (TC 2.A.29) family.

Its subcellular location is the mitochondrion inner membrane. The catalysed reaction is S-adenosyl-L-homocysteine(out) + S-adenosyl-L-methionine(in) = S-adenosyl-L-homocysteine(in) + S-adenosyl-L-methionine(out). In terms of biological role, mitochondrial S-adenosyl-L-methionine/S-adenosyl-L-homocysteine antiporter. Mediates the exchange of cytosolic S-adenosyl-L-methionine, the predominant methyl-group donor for macromolecule methylation processes, for mitochondrial S-adenosylhomocysteine(SAH), a by-product of methylation reactions. The chain is Mitochondrial S-adenosylmethionine carrier protein (slc25a26) from Xenopus laevis (African clawed frog).